We begin with the raw amino-acid sequence, 399 residues long: MTLFSFPNYVNWNKFDFIVLGAGISGIVLSHVLAQHGKSVLLLEKRNQLGGNCYDKLDETTGLLFHQYGPHIFHTDNQKVMDFIQPFFELNNYQHRVGLQLDNNLDLTLPFDFSQMRKLLDTKTASSLINFFQQHFPAEKHLTLMQLQTINFAPVQQLYQFLKIKVYGPYSVKMWGMPLEQIDPSVLGRVKISLSENSSYFPTATIQGLPKGGYTKAFTKMVDHPLIDLRLNCPANLISVNNNQLLFANQPITKPVVYCGLIDQLFGYCFGRLQYRSLHFEWKRYAVKQHQAYPVMNWPLHPTITRQVEYKQLTQEGLESNQTIVSCETPGAFREGDPRFMEPYYPLNDVSNNALFARYLKLANAIPNIHLLGRLALYQYIDMDRAIAQSLAKAEQLLQ.

FAD-binding positions include Ser-25, 44 to 45, Asn-52, and 71 to 72; these read EK and HI. Positions 171, 175, 200, 297, 306, and 345 each coordinate UDP-alpha-D-galactose. Arg-374 lines the FAD pocket. Tyr-380 contacts UDP-alpha-D-galactose. Residue 381–386 participates in FAD binding; that stretch reads IDMDRA.

Belongs to the UDP-galactopyranose/dTDP-fucopyranose mutase family. Requires FAD as cofactor.

It carries out the reaction UDP-alpha-D-galactose = UDP-alpha-D-galactofuranose. In terms of biological role, involved in the conversion of UDP-GalP into UDP-GalF through a 2-keto intermediate. The protein is UDP-galactopyranose mutase (glf) of Mycoplasma pneumoniae (strain ATCC 29342 / M129 / Subtype 1) (Mycoplasmoides pneumoniae).